The primary structure comprises 206 residues: Flavin prenyltransferase UbiX (206 aa).

Residues 11 to 13 (GAS), Ser37, 103 to 106 (SMST), and Arg138 contribute to the FMN site. 2 residues coordinate dimethylallyl phosphate: Tyr168 and Arg184.

It belongs to the UbiX/PAD1 family.

It carries out the reaction dimethylallyl phosphate + FMNH2 = prenylated FMNH2 + phosphate. Functionally, flavin prenyltransferase that catalyzes the synthesis of the prenylated FMN cofactor (prenyl-FMN) for 4-hydroxy-3-polyprenylbenzoic acid decarboxylase UbiD. The prenyltransferase is metal-independent and links a dimethylallyl moiety from dimethylallyl monophosphate (DMAP) to the flavin N5 and C6 atoms of FMN. In Synechocystis sp. (strain ATCC 27184 / PCC 6803 / Kazusa), this protein is Flavin prenyltransferase UbiX.